The following is a 257-amino-acid chain: NAD-capped RNA hydrolase NudC (257 aa).

Arginine 69 contacts substrate. The Zn(2+) site is built by cysteine 98 and cysteine 101. Substrate is bound at residue glutamate 111. Zn(2+) is bound by residues cysteine 116 and cysteine 119. Tyrosine 124 contributes to the substrate binding site. In terms of domain architecture, Nudix hydrolase spans 125–248 (PQIAPCIIVA…TVARRLIEDT (124 aa)). Residues alanine 158, glutamate 174, and glutamate 178 each coordinate a divalent metal cation. A Nudix box motif is present at residues 159 to 180 (GFVEVGETLEQAVAREVMEESG). 192 to 199 (QPWPFPQS) contacts substrate. Position 219 (glutamate 219) interacts with a divalent metal cation. Position 241 (alanine 241) interacts with substrate.

This sequence belongs to the Nudix hydrolase family. NudC subfamily. Homodimer. Mg(2+) serves as cofactor. The cofactor is Mn(2+). Requires Zn(2+) as cofactor.

The catalysed reaction is a 5'-end NAD(+)-phospho-ribonucleoside in mRNA + H2O = a 5'-end phospho-adenosine-phospho-ribonucleoside in mRNA + beta-nicotinamide D-ribonucleotide + 2 H(+). It carries out the reaction NAD(+) + H2O = beta-nicotinamide D-ribonucleotide + AMP + 2 H(+). The enzyme catalyses NADH + H2O = reduced beta-nicotinamide D-ribonucleotide + AMP + 2 H(+). In terms of biological role, mRNA decapping enzyme that specifically removes the nicotinamide adenine dinucleotide (NAD) cap from a subset of mRNAs by hydrolyzing the diphosphate linkage to produce nicotinamide mononucleotide (NMN) and 5' monophosphate mRNA. The NAD-cap is present at the 5'-end of some mRNAs and stabilizes RNA against 5'-processing. Has preference for mRNAs with a 5'-end purine. Catalyzes the hydrolysis of a broad range of dinucleotide pyrophosphates. The chain is NAD-capped RNA hydrolase NudC from Salmonella dublin (strain CT_02021853).